Reading from the N-terminus, the 380-residue chain is Pregnancy-associated glycoprotein 4 (380 aa).

The first 15 residues, methionine 1 to cysteine 15, serve as a signal peptide directing secretion. Positions isoleucine 16 to phenylalanine 53 are cleaved as a propeptide — activation peptide. In terms of domain architecture, Peptidase A1 spans tyrosine 71–alanine 377. N-linked (GlcNAc...) asparagine glycosylation occurs at asparagine 74. Aspartate 89 is an active-site residue. The cysteines at positions 102 and 107 are disulfide-linked. Asparagine 125 carries N-linked (GlcNAc...) asparagine glycosylation. A disulfide bridge connects residues cysteine 261 and cysteine 265. The active site involves aspartate 270. Cysteine 303 and cysteine 337 form a disulfide bridge.

The protein belongs to the peptidase A1 family. In terms of tissue distribution, trophoblast and placental tissue. Produced specifically in the invasive binucleate cells of the placenta.

The protein resides in the secreted. It localises to the extracellular space. The polypeptide is Pregnancy-associated glycoprotein 4 (Ovis aries (Sheep)).